Reading from the N-terminus, the 688-residue chain is Potassium-transporting ATPase ATP-binding subunit (688 aa).

Helical transmembrane passes span 34-54, 62-82, 219-239, and 260-280; these read PVMF…LAIL, AMFT…ANMA, VALT…TATL, and VLVA…LSAI. The active-site 4-aspartylphosphate intermediate is Asp-313. Residues Asp-350, Glu-354, 383–390, and Lys-401 each bind ATP; that span reads FSAQTRMS. Positions 524 and 528 each coordinate Mg(2+). 3 consecutive transmembrane segments (helical) span residues 594 to 614, 622 to 642, and 662 to 682; these read FAII…LNIM, AILS…PLAL, and IYGL…DLLL.

Belongs to the cation transport ATPase (P-type) (TC 3.A.3) family. Type IA subfamily. In terms of assembly, the system is composed of three essential subunits: KdpA, KdpB and KdpC.

It localises to the cell inner membrane. It carries out the reaction K(+)(out) + ATP + H2O = K(+)(in) + ADP + phosphate + H(+). Functionally, part of the high-affinity ATP-driven potassium transport (or Kdp) system, which catalyzes the hydrolysis of ATP coupled with the electrogenic transport of potassium into the cytoplasm. This subunit is responsible for energy coupling to the transport system and for the release of the potassium ions to the cytoplasm. This is Potassium-transporting ATPase ATP-binding subunit from Yersinia pseudotuberculosis serotype I (strain IP32953).